Here is a 24-residue protein sequence, read N- to C-terminus: Carboxypeptidase 1 (24 aa).

N-linked (GlcNAc...) asparagine glycans are attached at residues N3 and N11.

This sequence belongs to the peptidase S10 family. Monomer. In terms of processing, contains both N- and O-linked sugar chains. The N-linked oligosaccharides are unique structures of Man(10)GlcNAc(2) and Man(11)GlcNAc(2). Deglycosylation does neither affect catalytic activity, pH, thermal stability, or resistance to proteolysis of the enzyme.

The protein resides in the secreted. With respect to regulation, inhibited by DFP. Removes acidic, neutral and basic amino acids as well as proline from the C-terminal position. Digests preferentially peptides containing a hydrophobic residue in P1' position, as well as arginine, lysine or phenylalanine in P1 position of ester substrate. Catalyzes also peptide synthesis. The chain is Carboxypeptidase 1 from Aspergillus niger.